The sequence spans 201 residues: Large ribosomal subunit protein uL4 (201 aa).

The tract at residues A45 to G71 is disordered.

Belongs to the universal ribosomal protein uL4 family. Part of the 50S ribosomal subunit.

Functionally, one of the primary rRNA binding proteins, this protein initially binds near the 5'-end of the 23S rRNA. It is important during the early stages of 50S assembly. It makes multiple contacts with different domains of the 23S rRNA in the assembled 50S subunit and ribosome. Its function is as follows. Forms part of the polypeptide exit tunnel. The chain is Large ribosomal subunit protein uL4 from Shewanella pealeana (strain ATCC 700345 / ANG-SQ1).